We begin with the raw amino-acid sequence, 325 residues long: 7,8-didemethyl-8-hydroxy-5-deazariboflavin synthase (325 aa).

The 241-residue stretch at 1–241 folds into the Radical SAM core domain; the sequence is MTYSKNVFVP…SDIAVQVAPN (241 aa). Residues Cys15, Cys19, and Cys22 each contribute to the [4Fe-4S] cluster site.

The protein belongs to the radical SAM superfamily. CofG family. As to quaternary structure, consists of two subunits, CofG and CofH. [4Fe-4S] cluster serves as cofactor.

The catalysed reaction is 5-amino-5-(4-hydroxybenzyl)-6-(D-ribitylimino)-5,6-dihydrouracil + S-adenosyl-L-methionine = 7,8-didemethyl-8-hydroxy-5-deazariboflavin + 5'-deoxyadenosine + L-methionine + NH4(+) + H(+). The protein operates within cofactor biosynthesis; coenzyme F0 biosynthesis. In terms of biological role, catalyzes the radical-mediated synthesis of 7,8-didemethyl-8-hydroxy-5-deazariboflavin from 5-amino-5-(4-hydroxybenzyl)-6-(D-ribitylimino)-5,6-dihydrouracil. This Methanosarcina barkeri (strain Fusaro / DSM 804) protein is 7,8-didemethyl-8-hydroxy-5-deazariboflavin synthase.